A 101-amino-acid chain; its full sequence is Urease subunit beta (101 aa).

This sequence belongs to the urease beta subunit family. In terms of assembly, heterotrimer of UreA (gamma), UreB (beta) and UreC (alpha) subunits. Three heterotrimers associate to form the active enzyme.

The protein localises to the cytoplasm. It catalyses the reaction urea + 2 H2O + H(+) = hydrogencarbonate + 2 NH4(+). It functions in the pathway nitrogen metabolism; urea degradation; CO(2) and NH(3) from urea (urease route): step 1/1. The polypeptide is Urease subunit beta (Rhodopseudomonas palustris (strain ATCC BAA-98 / CGA009)).